Reading from the N-terminus, the 718-residue chain is Probable glycerol-3-phosphate acyltransferase, mitochondrial (718 aa).

The HXXXXD motif motif lies at 167-172 (HRSHLD). The helical transmembrane segment at 409–425 (MMCSISPVAVVSCLLLA) threads the bilayer.

Belongs to the GPAT/DAPAT family.

It is found in the mitochondrion membrane. It catalyses the reaction sn-glycerol 3-phosphate + an acyl-CoA = a 1-acyl-sn-glycero-3-phosphate + CoA. Its pathway is phospholipid metabolism; CDP-diacylglycerol biosynthesis; CDP-diacylglycerol from sn-glycerol 3-phosphate: step 1/3. This chain is Probable glycerol-3-phosphate acyltransferase, mitochondrial (acl-6), found in Caenorhabditis elegans.